The chain runs to 224 residues: 4-aminobenzoate synthase (224 aa).

6 residues coordinate Fe(2+): E77, H84, E138, H169, D173, and H176.

The protein belongs to the CADD family. In terms of assembly, homodimer. The cofactor is Fe(2+). Mn(2+) is required as a cofactor.

In terms of biological role, involved in de novo para-aminobenzoate (PABA) biosynthesis. Acts as a self-sacrificing or 'suicide' enzyme that utilizes its own active site tyrosine residue(s) as the substrate for PABA synthesis. The side chain of the tyrosine residue is released from the protein backbone via cleavage of the C(alpha)-C(beta) bond, leaving a glycine in place of the original tyrosine residue. Reaction requires O(2) and a reduced dimetal cofactor. This Chlamydia pneumoniae (Chlamydophila pneumoniae) protein is 4-aminobenzoate synthase.